Reading from the N-terminus, the 727-residue chain is Adhesion G protein-coupled receptor L4 (727 aa).

Residues 1–19 (MKLLLFAAWFSSLLDPCRF) form the signal peptide. Over 20–467 (LDICQSCHPN…LAHYNVLTRI (448 aa)) the chain is Extracellular. Positions 52-90 (DDNECETVPEICGLHANCTNYVGGYYCNCLSGFISNGTE) constitute an EGF-like 1; calcium-binding domain. Intrachain disulfides connect C56–C69, C63–C78, C106–C118, C112–C127, C408–C438, and C426–C440. The EGF-like 2; calcium-binding domain occupies 102–139 (DINECEEDRKCGPNSKCHNNIGSFICSCLRGYTSPAGP). Positions 282–456 (TQMQVHAGDV…AILMSSARAN (175 aa)) constitute a GAIN-B domain. The segment at 408–456 (CAFWEYSPSMMGHWSLDGCIRTRVNTTHTSCSCNHLTHFAILMSSARAN) is GPS. Residues 468-488 (TQLGMVISLICLSMCIFTFWF) traverse the membrane as a helical segment. Residues 489-496 (FRDIQNTR) are Cytoplasmic-facing. Residues 497 to 517 (TTIHKNLCCSLFMAQFIFLIG) traverse the membrane as a helical segment. Over 518–535 (INKSAHKWFCSLIAGLLH) the chain is Extracellular. A helical transmembrane segment spans residues 536 to 556 (YFFLAAFAWMCIEGIHLYLIV). The Cytoplasmic segment spans residues 557-568 (VGVIYNKGFLHR). A helical membrane pass occupies residues 569-589 (NFYAFGYGSPAVVVAISATLG). Over 590-609 (YKYYGTSSVCWLSTENNFIW) the chain is Extracellular. Residues 610–630 (SFIGPAILIILVNLLAFAVII) form a helical membrane-spanning segment. Topologically, residues 631 to 654 (YKVYRHTAVKKPEISHYENIRSCA) are cytoplasmic. Residues 655–675 (RGAIALLFVLGVTWAFGVMYI) traverse the membrane as a helical segment. Residues 676 to 682 (LYETTLT) lie on the Extracellular side of the membrane. Residues 683-703 (AYLFTFANVFQGMFIFIFLCV) traverse the membrane as a helical segment.

It belongs to the G-protein coupled receptor 2 family. Adhesion G-protein coupled receptor (ADGR) subfamily. In terms of assembly, heterodimer of 2 chains generated by proteolytic processing; the large extracellular N-terminal fragment and the membrane-bound C-terminal fragment predominantly remain associated and non-covalently linked. Post-translationally, autoproteolytically processed at the GPS region of the GAIN-B domain; this cleavage modulates receptor activity.

Its subcellular location is the cell membrane. Functionally, orphan receptor that plays a role in vessel formation. The protein is Adhesion G protein-coupled receptor L4 of Danio rerio (Zebrafish).